We begin with the raw amino-acid sequence, 140 residues long: HTH-type transcriptional regulator AdhR (140 aa).

The HTH merR-type domain occupies 1–69; that stretch reads MNIAQVAKQF…IEALIEYTTL (69 aa). The H-T-H motif DNA-binding region spans 3–22; it reads IAQVAKQFGLTAATLRYYER. Residues 75–125 are a coiled coil; the sequence is RTVEARKNILADERQRLIEKRKEIDETIKRLDTKIKDYDGKLRENEAKLKS. Residues 120–140 form a disordered region; the sequence is EAKLKSRPKTESLHGSVEQRR.

In terms of biological role, transcriptional regulator involved in the response to aldehyde stress. Binds to the promoter region of the adhA-yraA operon, the yraC and its own promoter region; binding is unchanged in the presence of aldehydes. In Bacillus subtilis (strain 168), this protein is HTH-type transcriptional regulator AdhR (adhR).